A 636-amino-acid chain; its full sequence is Nuclear receptor subfamily 2 group C member 1 (636 aa).

The segment at residues 149–224 is a DNA-binding region (nuclear receptor); it reads VELCVVCGDK…LGMKQDSVQC (76 aa). 2 NR C4-type zinc fingers span residues 152 to 172 and 188 to 207; these read CVVC…CEGC and CRGS…CQYC. An NR LBD domain is found at 382–623; sequence ECVGSNSNLT…SIIPYILRME (242 aa).

The protein belongs to the nuclear hormone receptor family. NR2 subfamily.

Its subcellular location is the nucleus. Orphan nuclear receptor. Binds the IR7 element in the promoter of its own gene in an autoregulatory negative feedback mechanism. Primarily repressor of a broad range of genes. Binds to hormone response elements (HREs) consisting of two 5'-AGGTCA-3' half site direct repeat consensus sequences. This is Nuclear receptor subfamily 2 group C member 1 from Xenopus tropicalis (Western clawed frog).